Consider the following 321-residue polypeptide: Lactamase-like protein notP (321 aa).

Positions 108, 110, 112, and 113 each coordinate Zn(2+). Residue D112 is the Proton donor/acceptor of the active site.

It belongs to the metallo-beta-lactamase superfamily. It depends on Zn(2+) as a cofactor.

Functionally, lactamase-like protein; part of the gene cluster that mediates the biosynthesis of notoamide, a fungal indole alkaloid that belongs to a family of natural products containing a characteristic bicyclo[2.2.2]diazaoctane core. The first step of notoamide biosynthesis involves coupling of L-proline and L-tryptophan by the bimodular NRPS notE, to produce cyclo-L-tryptophan-L-proline called brevianamide F. The reverse prenyltransferase notF then acts as a deoxybrevianamide E synthase and converts brevianamide F to deoxybrevianamide E via reverse prenylation at C-2 of the indole ring leading to the bicyclo[2.2.2]diazaoctane core. Deoxybrevianamide E is further hydroxylated at C-6 of the indole ring, likely catalyzed by the cytochrome P450 monooxygenase notG, to yield 6-hydroxy-deoxybrevianamide E. 6-hydroxy-deoxybrevianamide E is a specific substrate of the prenyltransferase notC for normal prenylation at C-7 to produce 6-hydroxy-7-prenyl-deoxybrevianamide, also called notoamide S. As the proposed pivotal branching point in notoamide biosynthesis, notoamide S can be diverted to notoamide E through an oxidative pyran ring closure putatively catalyzed by either notH cytochrome P450 monooxygenase or the notD FAD-linked oxidoreductase. This step would be followed by an indole 2,3-epoxidation-initiated pinacol-like rearrangement catalyzed by the notB FAD-dependent monooxygenase leading to the formation of notoamide C and notoamide D. On the other hand notoamide S is converted to notoamide T by notH (or notD), a bifunctional oxidase that also functions as the intramolecular Diels-Alderase responsible for generation of (+)-notoamide T. To generate antipodal (-)-notoaminide T, notH' (or notD') in Aspergillus versicolor is expected to catalyze a Diels-Alder reaction leading to the opposite stereochemistry. The remaining oxidoreductase notD (or notH) likely catalyzes the oxidative pyran ring formation to yield (+)-stephacidin A. The FAD-dependent monooxygenase notI is highly similar to notB and is predicted to catalyze a similar conversion from (+)-stephacidin A to (-)-notoamide B via the 2,3-epoxidation of (+)-stephacidin A followed by a pinacol-type rearrangement. Finally, it remains unclear which enzyme could be responsible for the final hydroxylation steps leading to notoamide A and sclerotiamide. The function of notP in the notoamide biosynthesis has not been determined yet. This Aspergillus sp. (strain MF297-2) protein is Lactamase-like protein notP.